The sequence spans 227 residues: MPTSPFIDDLIRDRRAKRGFLDQPVSIEMVKDILSAAKYAPSSSNTQPWRCYVITGEARERITTAAVEAYRAAPEGLPPEYPFFPQPLHEPYATRFNSFRGQLGDALGIPRSDITLRRRDVERQFRFFDAPVGLIFTMDRRLEWASFICYGCFLQNIMLAAKGRGLDTCTQVFWSMQHPVLRTELNLPDDQMVVAGMSLGWADNSLPENQMSISKMELEEFTTFVHE.

14–18 lines the FMN pocket; sequence RRAKR. Residues Ser44 and Ile109 each contribute to the NADP(+) site. FMN-binding positions include 172-173 and Lys215; that span reads VF.

It belongs to the nitroreductase family. Monomer. FMN is required as a cofactor.

It carries out the reaction N-phenylhydroxylamine + 2 NADP(+) + H2O = nitrobenzene + 2 NADPH + 2 H(+). The protein operates within xenobiotic degradation; nitrobenzene degradation. With respect to regulation, inhibited by dicumarol, p-hydroxymercuribenzoate and salicyl hydroxamate. Its function is as follows. Involved in the biodegradation of nitroaromatic compounds. Catalyzes the two-electron reduction of nitrobenzene (NB) to produce a nitrosobenzene (NOB) intermediate, which is immediately reduced to hydroxylaminobenzene (HAB) by a second two-electron transfer. Also active on menadione and nitrofurazone. Replacing NADPH with NADH results in a 4-fold decrease in the reaction rate. The sequence is that of Nitrobenzene nitroreductase from Ectopseudomonas oleovorans (Pseudomonas oleovorans).